A 156-amino-acid chain; its full sequence is Transcriptional repressor NrdR (156 aa).

Residues 3-34 (CPFCHSDNDKVQDSRTAEAGYVVRRKRLCQTC) fold into a zinc finger. The 91-residue stretch at 49-139 (VRVVKSDETR…VYRDFDDAKD (91 aa)) folds into the ATP-cone domain.

This sequence belongs to the NrdR family. Zn(2+) is required as a cofactor.

Functionally, negatively regulates transcription of bacterial ribonucleotide reductase nrd genes and operons by binding to NrdR-boxes. This is Transcriptional repressor NrdR from Rhodopirellula baltica (strain DSM 10527 / NCIMB 13988 / SH1).